A 1107-amino-acid chain; its full sequence is MMTSVGTNRARGNWEQPQNQNQTQHKQRPQATAEQIRLAQMISDHNDADFEEKVKQLIDITGKNQDECVIALHDCNGDVNRAINVLLEGNPDTHSWEMVGKKKGVSGQKDGGQTESNEEGKENRDRDRDYSRRRGGPPRRGRGASRGREFRGQENGLDGTKSGGPSGRGTDRGRRGRGRGRGSSGRRGGRFSAQGMGTFNPADYAEPANTDDNYGNSSGNTWNNTGHFEPDDGTRLDFIGVEGSNYPRKFETAPGAWRTATEEWGTEDWNEDLSETKIFTASNVSSVPLPAENVTITAGQRIDLAVLLGKTPSSMENDSSNLDPSQAPSLAQPLVFSNSKQNAISQPASGSTFSHHSMVSMLGKGFGDVGEAKGGSTTGSQFLEQFKTAQALAQLAAQHSQSGSTTTSSWDMGSTTQSPSLVQYDLKSANDSTVHSPFTKRQAFTPSSTMMEVFLQEKPPAVATSTAAPPPPSSPLPSKSTSAPQMSPGSSDNQSSSPQPAQQKLKQQKKKTSLTSKIPALAVEMPGSADISGLNLQFGALQFGSEPVLSDYESTPTTSASSSQAPSSLYTSTASESSSTVSSNQSQESGYQSGPIQSTTYTSQNNAQGPLYEQRSTQTRRYPSSISSSPQKDLTQAKNGFSSVQATQLQTTQSVEGATGSAVKSESPSTSSIPSLNETVPAASLLTTANQHSSSLSGLSHTEEIPNTTTTQHSSALSTQQNTLSSSTSSGRTSTSTLLHTSVESEANLHSSSSTFSTTSSTVSAPPPVVSVSSSLNSGSSLGLSLGSNSTVTASTRSSVATTSGKAPPNLPPGVPPLLPNPYIMAPGLLHAYPPQVYGYDDLQMLQTRFPLDYYSIPFPTPTTPLTGRDGSLASNPYSGDLTKFGRGDASSPAPATTLAQPQQNQTQTHHTTQQTFLNPALPPGYSYTSLPYYTGVPGLPSTFQYGPAVFPVAPTSSKQHGVNVSVNASATPFQQPSGYGSHGYNTGVSVTSSNTGVPDISGSVYSKTQQSFEKQGFHSGTPAASFNLPSALGSGGPINPATAAAYPPAPFMHILTPHQQPHSQILHHHLQQDGQTGSGQRSQTSSIPQKPQTNKSAYNSYSWGAN.

Residue M1 is modified to N-acetylmethionine. The disordered stretch occupies residues 1–33; the sequence is MMTSVGTNRARGNWEQPQNQNQTQHKQRPQATA. Residues 49 to 89 form the UBA domain; that stretch reads DFEEKVKQLIDITGKNQDECVIALHDCNGDVNRAINVLLEG. The segment at 92-229 is disordered; sequence DTHSWEMVGK…NTWNNTGHFE (138 aa). Residues 118–132 show a composition bias toward basic and acidic residues; it reads EEGKENRDRDRDYSR. Basic residues predominate over residues 133–145; that stretch reads RRGGPPRRGRGAS. An asymmetric dimethylarginine mark is found at R187 and R190. Over residues 213–226 the composition is skewed to low complexity; it reads NYGNSSGNTWNNTG. 3 positions are modified to phosphoserine: S376, S380, and S436. T445 carries the post-translational modification Phosphothreonine. Disordered regions lie at residues 461-513, 550-676, and 689-814; these read AVAT…KKTS, SDYE…IPSL, and ANQH…LPPG. Phosphoserine occurs at positions 474, 487, 490, 491, and 497. Composition is skewed to low complexity over residues 494–505 and 554–589; these read QSSSPQPAQQKL and STPTTSASSSQAPSSLYTSTASESSSTVSSNQSQES. Polar residues predominate over residues 590–656; it reads GYQSGPIQST…TQLQTTQSVE (67 aa). Phosphoserine is present on residues S624, S625, S628, and S629. Low complexity predominate over residues 665-675; it reads SESPSTSSIPS. Positions 689 to 713 are enriched in polar residues; the sequence is ANQHSSSLSGLSHTEEIPNTTTTQH. Over residues 714–804 the composition is skewed to low complexity; the sequence is SSALSTQQNT…STRSSVATTS (91 aa). A phosphoserine mark is found at S872 and S879. 2 disordered regions span residues 885-921 and 1060-1107; these read FGRGDASSPAPATTLAQPQQNQTQTHHTTQQTFLNPA and QQPH…WGAN. 2 stretches are compositionally biased toward low complexity: residues 893 to 916 and 1073 to 1087; these read PAPATTLAQPQQNQTQTHHTTQQT and QDGQTGSGQRSQTSS. Residues 1088 to 1107 are compositionally biased toward polar residues; the sequence is IPQKPQTNKSAYNSYSWGAN.

In terms of assembly, interacts with BMI1. Part of a complex consisting of UBAP2L, BMI1 and RNF2. Interacts with G3BP1 (via NTF2 domain); promoting stress granule formation.

The protein resides in the nucleus. It localises to the chromosome. Its subcellular location is the cytoplasm. It is found in the stress granule. Its function is as follows. Recruits the ubiquitination machinery to RNA polymerase II for polyubiquitination, removal and degradation, when the transcription-coupled nucleotide excision repair (TC-NER) machinery fails to resolve DNA damage. Plays an important role in the activity of long-term repopulating hematopoietic stem cells (LT-HSCs). Is a regulator of stress granule assembly, required for their efficient formation. Required for proper brain development and neocortex lamination. This is Ubiquitin-associated protein 2-like from Mus musculus (Mouse).